A 96-amino-acid polypeptide reads, in one-letter code: Putative pterin-4-alpha-carbinolamine dehydratase (96 aa).

This sequence belongs to the pterin-4-alpha-carbinolamine dehydratase family.

The catalysed reaction is (4aS,6R)-4a-hydroxy-L-erythro-5,6,7,8-tetrahydrobiopterin = (6R)-L-erythro-6,7-dihydrobiopterin + H2O. This Brucella anthropi (strain ATCC 49188 / DSM 6882 / CCUG 24695 / JCM 21032 / LMG 3331 / NBRC 15819 / NCTC 12168 / Alc 37) (Ochrobactrum anthropi) protein is Putative pterin-4-alpha-carbinolamine dehydratase.